The primary structure comprises 295 residues: MKQTTINHSVELVGIGLHKGVPVKLVLEPLEENQGIVFYRSDLGVKLPLKPENIVDTKMATVLGKDNARISTIEHLLSAVHAYGIDNLKISVDNEEIPIMDGSALTYCMLLDEAGIKELDAPKKVMEIKQAVEVREGDKFVKIEPDSQLSLNFTIDFNHPVIAKQAHHFVFSKTAYKEQVAKARTFGFLQEVNYLRSIGLAKGGSLNNCIVLDENSILNKEGLRCEKEFVCHKILDAMGDLMVLGMPVMGKYTSFSGSHKLNSMLVKAILADAKNYEVLIASDPAKEFALQKAFA.

Residues histidine 75, histidine 232, and aspartate 236 each coordinate Zn(2+). Histidine 259 functions as the Proton donor in the catalytic mechanism.

Belongs to the LpxC family. The cofactor is Zn(2+).

The enzyme catalyses a UDP-3-O-[(3R)-3-hydroxyacyl]-N-acetyl-alpha-D-glucosamine + H2O = a UDP-3-O-[(3R)-3-hydroxyacyl]-alpha-D-glucosamine + acetate. It participates in glycolipid biosynthesis; lipid IV(A) biosynthesis; lipid IV(A) from (3R)-3-hydroxytetradecanoyl-[acyl-carrier-protein] and UDP-N-acetyl-alpha-D-glucosamine: step 2/6. Catalyzes the hydrolysis of UDP-3-O-myristoyl-N-acetylglucosamine to form UDP-3-O-myristoylglucosamine and acetate, the committed step in lipid A biosynthesis. The sequence is that of UDP-3-O-acyl-N-acetylglucosamine deacetylase from Helicobacter pylori (strain J99 / ATCC 700824) (Campylobacter pylori J99).